We begin with the raw amino-acid sequence, 397 residues long: L-rhamnonate dehydratase (397 aa).

Substrate is bound by residues H25 and R51. Mg(2+) is bound by residues D217, E243, and E271. H321 acts as the Proton acceptor in catalysis. E341 is a binding site for substrate.

This sequence belongs to the mandelate racemase/muconate lactonizing enzyme family. RhamD subfamily. As to quaternary structure, homooctamer; tetramer of dimers. The cofactor is Mg(2+).

The enzyme catalyses L-rhamnonate = 2-dehydro-3-deoxy-L-rhamnonate + H2O. Its pathway is carbohydrate degradation; L-rhamnose degradation. Functionally, catalyzes the dehydration of L-rhamnonate to 2-keto-3-deoxy-L-rhamnonate (KDR). Also shows activity with L-lyxonate and L-mannonate, with much lower catalytic efficiency. Catalyzes the third step in an alternative pathway for rhamnose utilization that does not involve phosphorylated intermediates. The protein is L-rhamnonate dehydratase of Sphingomonas sp. (strain SKA58).